Reading from the N-terminus, the 259-residue chain is Imidazole glycerol phosphate synthase subunit HisF (259 aa).

Residues aspartate 11 and aspartate 130 contribute to the active site.

Belongs to the HisA/HisF family. Heterodimer of HisH and HisF.

It localises to the cytoplasm. It carries out the reaction 5-[(5-phospho-1-deoxy-D-ribulos-1-ylimino)methylamino]-1-(5-phospho-beta-D-ribosyl)imidazole-4-carboxamide + L-glutamine = D-erythro-1-(imidazol-4-yl)glycerol 3-phosphate + 5-amino-1-(5-phospho-beta-D-ribosyl)imidazole-4-carboxamide + L-glutamate + H(+). The protein operates within amino-acid biosynthesis; L-histidine biosynthesis; L-histidine from 5-phospho-alpha-D-ribose 1-diphosphate: step 5/9. IGPS catalyzes the conversion of PRFAR and glutamine to IGP, AICAR and glutamate. The HisF subunit catalyzes the cyclization activity that produces IGP and AICAR from PRFAR using the ammonia provided by the HisH subunit. This Desulforapulum autotrophicum (strain ATCC 43914 / DSM 3382 / VKM B-1955 / HRM2) (Desulfobacterium autotrophicum) protein is Imidazole glycerol phosphate synthase subunit HisF.